A 203-amino-acid chain; its full sequence is Holliday junction branch migration complex subunit RuvA (203 aa).

The tract at residues M1–L63 is domain I. Residues S64 to K142 are domain II. Residues D143–G149 are flexible linker. Residues I150 to F203 form a domain III region.

The protein belongs to the RuvA family. In terms of assembly, homotetramer. Forms an RuvA(8)-RuvB(12)-Holliday junction (HJ) complex. HJ DNA is sandwiched between 2 RuvA tetramers; dsDNA enters through RuvA and exits via RuvB. An RuvB hexamer assembles on each DNA strand where it exits the tetramer. Each RuvB hexamer is contacted by two RuvA subunits (via domain III) on 2 adjacent RuvB subunits; this complex drives branch migration. In the full resolvosome a probable DNA-RuvA(4)-RuvB(12)-RuvC(2) complex forms which resolves the HJ.

Its subcellular location is the cytoplasm. Functionally, the RuvA-RuvB-RuvC complex processes Holliday junction (HJ) DNA during genetic recombination and DNA repair, while the RuvA-RuvB complex plays an important role in the rescue of blocked DNA replication forks via replication fork reversal (RFR). RuvA specifically binds to HJ cruciform DNA, conferring on it an open structure. The RuvB hexamer acts as an ATP-dependent pump, pulling dsDNA into and through the RuvAB complex. HJ branch migration allows RuvC to scan DNA until it finds its consensus sequence, where it cleaves and resolves the cruciform DNA. The sequence is that of Holliday junction branch migration complex subunit RuvA from Rickettsia bellii (strain OSU 85-389).